The chain runs to 491 residues: Probable glycine dehydrogenase (decarboxylating) subunit 2 (491 aa).

Lysine 264 carries the N6-(pyridoxal phosphate)lysine modification.

Belongs to the GcvP family. C-terminal subunit subfamily. As to quaternary structure, the glycine cleavage system is composed of four proteins: P, T, L and H. In this organism, the P 'protein' is a heterodimer of two subunits. Requires pyridoxal 5'-phosphate as cofactor.

It catalyses the reaction N(6)-[(R)-lipoyl]-L-lysyl-[glycine-cleavage complex H protein] + glycine + H(+) = N(6)-[(R)-S(8)-aminomethyldihydrolipoyl]-L-lysyl-[glycine-cleavage complex H protein] + CO2. The glycine cleavage system catalyzes the degradation of glycine. The P protein binds the alpha-amino group of glycine through its pyridoxal phosphate cofactor; CO(2) is released and the remaining methylamine moiety is then transferred to the lipoamide cofactor of the H protein. In Coxiella burnetii (strain Dugway 5J108-111), this protein is Probable glycine dehydrogenase (decarboxylating) subunit 2.